The sequence spans 473 residues: Cysteine--tRNA ligase (473 aa).

C28 lines the Zn(2+) pocket. The 'HIGH' region signature appears at 30–40 (PTVYNYIHIGN). Positions 210, 235, and 239 each coordinate Zn(2+). Positions 267–271 (KMSKS) match the 'KMSKS' region motif. K270 serves as a coordination point for ATP.

Belongs to the class-I aminoacyl-tRNA synthetase family. As to quaternary structure, monomer. Zn(2+) serves as cofactor.

The protein resides in the cytoplasm. It carries out the reaction tRNA(Cys) + L-cysteine + ATP = L-cysteinyl-tRNA(Cys) + AMP + diphosphate. This chain is Cysteine--tRNA ligase, found in Fusobacterium nucleatum subsp. nucleatum (strain ATCC 25586 / DSM 15643 / BCRC 10681 / CIP 101130 / JCM 8532 / KCTC 2640 / LMG 13131 / VPI 4355).